The chain runs to 555 residues: Carboxysome assembly protein CcmM (555 aa).

Positions 1–209 (MAVRSTAAPP…CIAPLRNDQV (209 aa)) are has carbonic anhydrase (CA) activity. Catalysis depends on glutamate 56, which acts as the Proton donor/acceptor. Residues histidine 75, histidine 102, and histidine 107 each contribute to the Zn(2+) site. A disulfide bridge connects residues cysteine 194 and cysteine 200. The tract at residues 223-315 (SSEVASNSLG…RVLETIIQRP (93 aa)) is rbcS-like repeat 1, SSUL1. Disordered regions lie at residues 323–351 (TSFK…SNGA) and 441–464 (NGQV…SGTA). 2 stretches are compositionally biased toward low complexity: residues 330-351 (SNTN…SNGA) and 445-464 (APSS…SGTA). A rbcS-like repeat 2, SSUL2 region spans residues 347 to 440 (YSNGATSGKV…RVLESIIQRP (94 aa)). Positions 460–555 (SSGTATATAT…RVLETIIQRP (96 aa)) are rbcS-like repeat 3, SSUL3.

Belongs to the gamma-class carbonic anhydrase family. Probable homotrimer; zinc is bound between adjacent monomers. Full length protein (M58) interacts with CcmN. The C-terminal RbcS-like domains (SSUL) bind to holo-RuBisCO, as does the M35 short form. Zn(2+) is required as a cofactor. The first amino acid of the short form (equivalent to Val-226) is not seen in Edman degradation, while Ser-230 may be post-translationally modified. Migrates in gels as 2 about equal forms of about 60 and 35 kDa (called M58 and M35). They are probably the result of alternative translation initiation.

The protein localises to the carboxysome. It localises to the cytoplasm. The catalysed reaction is hydrogencarbonate + H(+) = CO2 + H2O. Its activity is regulated as follows. Carbonic anhydrase (CA) activity is probably under redox control to remain inactive in the cytoplasm. Carbonic anhydrase (CA) activity of full-length protein and N-terminal fragment is inhibited by ethoxyzolamide. N-terminal fragment CA activity is activated under oxidizing conditions and inhibited under reducing conditions. Its function is as follows. Functions as a scaffold protein for the assembly of beta-carboxysomes, initiates carboxysome assembly by coalescing RuBisCO (ribulose bisphosphate carboxylase, rbcL-rbcS). Produced as a full-length (M58) and a short form (M35), possibly by alternative translation initiation; probably both forms are required for correct carboxysome assembly and growth. In this strain both forms are equally abundant. In terms of biological role, a moderately active carbonic anhydrase that catalyzes the reversible hydration of carbon dioxide. Essential to photosynthetic carbon dioxide fixation, supplies CO(2) to ribulose bisphosphate carboxylase (RuBisCO) in the carboxysome. Also hydrolyzes COS. Functionally, beta-carboxysome assembly initiates when soluble RuBisCO is condensed into a liquid matrix in a pre-carboxysome by the RbcS-like domains of probably both forms of CcmM. CcmN interacts with the N-terminus of full length CcmM, and then recruits the shell proteins (CcmK) via CcmN's encapsulation peptide. Shell formation requires both CcmK proteins and CcmO. CcmL caps the otherwise elongated carboxysome. Once fully encapsulated carboxysomes are formed, they migrate within the cell probably via interactions with the cytoskeleton. The chain is Carboxysome assembly protein CcmM from Nostoc sp. (strain PCC 7120 / SAG 25.82 / UTEX 2576).